Consider the following 454-residue polypeptide: Mitochondrial dynamics protein MID49 (454 aa).

Topologically, residues 1-22 (MAEFSQKRGKRRSDEGLGSMVD) are mitochondrial intermembrane. Ser-13 carries the phosphoserine modification. The chain crosses the membrane as a helical span at residues 23–43 (FLLANARLVLGVGGAAVLGIA). Residues 44-454 (TLAVKRFIDR…SGLQEPEGLL (411 aa)) lie on the Cytoplasmic side of the membrane. A disordered region spans residues 76–119 (ATPHLQPRPPPAALSQPVLPLAPSSSAPEGPAETDPEVTPQLSS). Residues 88–103 (ALSQPVLPLAPSSSAP) show a composition bias toward low complexity.

This sequence belongs to the MID49/MID51 family. In terms of assembly, interacts with DNM1L. As to expression, expressed in all tissues tested with highest expression in heart and skeletal muscle.

It localises to the mitochondrion outer membrane. In terms of biological role, mitochondrial outer membrane protein involved in the regulation of mitochondrial organization. It is required for mitochondrial fission and promotes the recruitment and association of the fission mediator dynamin-related protein 1 (DNM1L) to the mitochondrial surface independently of the mitochondrial fission FIS1 and MFF proteins. Regulates DNM1L GTPase activity. The protein is Mitochondrial dynamics protein MID49 (MIEF2) of Homo sapiens (Human).